The sequence spans 203 residues: E3 ubiquitin-protein ligase RNF152 (203 aa).

Residues 12–55 form an RING-type zinc finger; sequence CQICFNYYSPRRRPKLLDCKHTCCSVCLQQMRTSQKDVRCPWCR. The segment at 106-165 is necessary for interaction with RRAGA; that stretch reads ISKERALLPGDMGCRLLPGSQQKSVTVVTIPAEQQPLQGGAPQEAVEEEQDRRGVVKSST. The helical transmembrane segment at 167 to 187 threads the bilayer; it reads SGVCTVILVACVLVFLLGIVL.

It belongs to the RNF152 family. In terms of assembly, interacts with RRAGA (inactive GDP-bound form); stimulated by amino acid starvation. Interacts with SEC16A. Ubiquitinated. Autoubiquitinated in vitro, leading to its degradation by the proteasome. As to expression, widely expressed.

Its subcellular location is the lysosome membrane. It carries out the reaction S-ubiquitinyl-[E2 ubiquitin-conjugating enzyme]-L-cysteine + [acceptor protein]-L-lysine = [E2 ubiquitin-conjugating enzyme]-L-cysteine + N(6)-ubiquitinyl-[acceptor protein]-L-lysine.. The protein operates within protein modification; protein ubiquitination. In terms of biological role, E3 ubiquitin-protein ligase that acts as a negative regulator of mTORC1 signaling by mediating ubiquitination of RagA/RRAGA and RHEB. Catalyzes 'Lys-63'-linked polyubiquitination of RagA/RRAGA in response to amino acid starvation, thereby regulating mTORC1 signaling. Also mediates monoubiquitination of RHEB, promoting its association with the TSC-TBC complex and subsequent inhibition. Also mediates 'Lys-48'-linked polyubiquitination of target proteins and their subsequent targeting to the proteasome for degradation. Induces apoptosis when overexpressed. The sequence is that of E3 ubiquitin-protein ligase RNF152 from Homo sapiens (Human).